The sequence spans 262 residues: Beta-phosphoglucomutase (262 aa).

Asp29 (nucleophile) is an active-site residue. Positions 29 and 31 each coordinate Mg(2+). Residue Asp29 is modified to 4-aspartylphosphate. Asp31 serves as the catalytic Proton donor/acceptor. Residues Asp31, Gly79, Arg82, Ser157, and Asn159 each contribute to the beta-D-glucose 6-phosphate site. Residue Asp215 coordinates Mg(2+).

It belongs to the HAD-like hydrolase superfamily. CbbY/CbbZ/Gph/YieH family. In terms of assembly, monomer. Mg(2+) is required as a cofactor. In terms of processing, autophosphorylated.

It carries out the reaction beta-D-glucose 1-phosphate = beta-D-glucose 6-phosphate. Its function is as follows. Catalyzes the interconversion of D-glucose 1-phosphate (G1P) and D-glucose 6-phosphate (G6P), forming beta-D-glucose 1,6-(bis)phosphate (beta-G16P) as an intermediate. This Mycobacterium bovis (strain ATCC BAA-935 / AF2122/97) protein is Beta-phosphoglucomutase.